A 164-amino-acid polypeptide reads, in one-letter code: Pleckstrin homology domain-containing family J member 1 (164 aa).

The PH domain maps to 15–108 (PAEMAAELGM…WMEALQRASY (94 aa)).

This Mus musculus (Mouse) protein is Pleckstrin homology domain-containing family J member 1 (Plekhj1).